The sequence spans 33 residues: Gastrin (33 aa).

Residues Q1 and Q18 each carry the pyrrolidone carboxylic acid modification. Y28 bears the Sulfotyrosine mark. Residue F33 is modified to Phenylalanine amide.

The protein belongs to the gastrin/cholecystokinin family.

It localises to the secreted. In terms of biological role, gastrin stimulates the stomach mucosa to produce and secrete hydrochloric acid and the pancreas to secrete its digestive enzymes. It also stimulates smooth muscle contraction and increases blood circulation and water secretion in the stomach and intestine. This Didelphis virginiana (North American opossum) protein is Gastrin (GAST).